The primary structure comprises 352 residues: Phosphate acyltransferase (352 aa).

This sequence belongs to the PlsX family. In terms of assembly, homodimer. Probably interacts with PlsY.

It localises to the cytoplasm. The catalysed reaction is a fatty acyl-[ACP] + phosphate = an acyl phosphate + holo-[ACP]. Its pathway is lipid metabolism; phospholipid metabolism. Catalyzes the reversible formation of acyl-phosphate (acyl-PO(4)) from acyl-[acyl-carrier-protein] (acyl-ACP). This enzyme utilizes acyl-ACP as fatty acyl donor, but not acyl-CoA. This chain is Phosphate acyltransferase, found in Bordetella bronchiseptica (strain ATCC BAA-588 / NCTC 13252 / RB50) (Alcaligenes bronchisepticus).